Consider the following 355-residue polypeptide: Guanine nucleotide-binding protein G(i) subunit alpha-2 (355 aa).

Glycine 2 is lipidated: N-myristoyl glycine. Cysteine 3 carries S-palmitoyl cysteine lipidation. A G-alpha domain is found at 32-355; sequence REVKLLLLGA…KNNLKDCGLF (324 aa). Residues 35–48 are G1 motif; sequence KLLLLGAGESGKST. GTP-binding positions include 40–47, 176–182, 201–205, 270–273, and alanine 327; these read GAGESGKS, LRTRVKT, DVGGQ, and NKKD. Mg(2+) is bound by residues serine 47 and threonine 182. Positions 174 to 182 are G2 motif; it reads DVLRTRVKT. The tract at residues 197 to 206 is G3 motif; sequence FKMFDVGGQR. The G4 motif stretch occupies residues 266-273; that stretch reads ILFLNKKD. A G5 motif region spans residues 325 to 330; that stretch reads TCATDT.

This sequence belongs to the G-alpha family. G(i/o/t/z) subfamily. G proteins are composed of 3 units; alpha, beta and gamma. The alpha chain contains the guanine nucleotide binding site.

It is found in the cytoplasm. The protein resides in the cytoskeleton. It localises to the microtubule organizing center. Its subcellular location is the centrosome. The protein localises to the cell membrane. Guanine nucleotide-binding proteins (G proteins) are involved as modulators or transducers in various transmembrane signaling systems. The G(i) proteins are involved in hormonal regulation of adenylate cyclase: they inhibit the cyclase in response to beta-adrenergic stimuli. May play a role in cell division. This is Guanine nucleotide-binding protein G(i) subunit alpha-2 (GNAI2) from Gallus gallus (Chicken).